A 484-amino-acid chain; its full sequence is Aspartyl/glutamyl-tRNA(Asn/Gln) amidotransferase subunit B (484 aa).

It belongs to the GatB/GatE family. GatB subfamily. In terms of assembly, heterotrimer of A, B and C subunits.

It carries out the reaction L-glutamyl-tRNA(Gln) + L-glutamine + ATP + H2O = L-glutaminyl-tRNA(Gln) + L-glutamate + ADP + phosphate + H(+). It catalyses the reaction L-aspartyl-tRNA(Asn) + L-glutamine + ATP + H2O = L-asparaginyl-tRNA(Asn) + L-glutamate + ADP + phosphate + 2 H(+). In terms of biological role, allows the formation of correctly charged Asn-tRNA(Asn) or Gln-tRNA(Gln) through the transamidation of misacylated Asp-tRNA(Asn) or Glu-tRNA(Gln) in organisms which lack either or both of asparaginyl-tRNA or glutaminyl-tRNA synthetases. The reaction takes place in the presence of glutamine and ATP through an activated phospho-Asp-tRNA(Asn) or phospho-Glu-tRNA(Gln). This is Aspartyl/glutamyl-tRNA(Asn/Gln) amidotransferase subunit B from Dechloromonas aromatica (strain RCB).